A 343-amino-acid polypeptide reads, in one-letter code: Glyceraldehyde-3-phosphate dehydrogenase (343 aa).

NAD(+) is bound by residues 13 to 14 (TI) and glycine 111. 140–142 (SCN) serves as a coordination point for D-glyceraldehyde 3-phosphate. Cysteine 141 serves as the catalytic Nucleophile. Arginine 169 contacts NAD(+). 195 to 196 (HA) is a D-glyceraldehyde 3-phosphate binding site. An NAD(+)-binding site is contributed by glutamine 303.

The protein belongs to the glyceraldehyde-3-phosphate dehydrogenase family. Homotetramer.

The protein resides in the cytoplasm. The enzyme catalyses D-glyceraldehyde 3-phosphate + phosphate + NADP(+) = (2R)-3-phospho-glyceroyl phosphate + NADPH + H(+). It catalyses the reaction D-glyceraldehyde 3-phosphate + phosphate + NAD(+) = (2R)-3-phospho-glyceroyl phosphate + NADH + H(+). It participates in carbohydrate degradation; glycolysis; pyruvate from D-glyceraldehyde 3-phosphate: step 1/5. In Sulfolobus acidocaldarius (strain ATCC 33909 / DSM 639 / JCM 8929 / NBRC 15157 / NCIMB 11770), this protein is Glyceraldehyde-3-phosphate dehydrogenase.